The chain runs to 342 residues: Nicotinate-nucleotide--dimethylbenzimidazole phosphoribosyltransferase (342 aa).

The active-site Proton acceptor is Glu311.

The protein belongs to the CobT family.

The enzyme catalyses 5,6-dimethylbenzimidazole + nicotinate beta-D-ribonucleotide = alpha-ribazole 5'-phosphate + nicotinate + H(+). The protein operates within nucleoside biosynthesis; alpha-ribazole biosynthesis; alpha-ribazole from 5,6-dimethylbenzimidazole: step 1/2. Functionally, catalyzes the synthesis of alpha-ribazole-5'-phosphate from nicotinate mononucleotide (NAMN) and 5,6-dimethylbenzimidazole (DMB). This chain is Nicotinate-nucleotide--dimethylbenzimidazole phosphoribosyltransferase, found in Photobacterium profundum (strain SS9).